Reading from the N-terminus, the 354-residue chain is Uroporphyrinogen decarboxylase (354 aa).

Substrate is bound by residues 25-29 (RQAGR), Asp75, Tyr152, Thr207, and His330.

This sequence belongs to the uroporphyrinogen decarboxylase family. As to quaternary structure, homodimer.

It localises to the cytoplasm. It carries out the reaction uroporphyrinogen III + 4 H(+) = coproporphyrinogen III + 4 CO2. Its pathway is porphyrin-containing compound metabolism; protoporphyrin-IX biosynthesis; coproporphyrinogen-III from 5-aminolevulinate: step 4/4. In terms of biological role, catalyzes the decarboxylation of four acetate groups of uroporphyrinogen-III to yield coproporphyrinogen-III. The sequence is that of Uroporphyrinogen decarboxylase from Xanthomonas euvesicatoria pv. vesicatoria (strain 85-10) (Xanthomonas campestris pv. vesicatoria).